Consider the following 60-residue polypeptide: Cytotoxin 4 (60 aa).

Intrachain disulfides connect Cys3-Cys21, Cys14-Cys38, Cys42-Cys53, and Cys54-Cys59.

This sequence belongs to the three-finger toxin family. Short-chain subfamily. Type IA cytotoxin sub-subfamily. Monomer in solution; Homodimer and oligomer in the presence of negatively charged lipids forming a pore with a size ranging between 20 and 30 Angstroms. As to expression, expressed by the venom gland.

It localises to the secreted. The protein resides in the target cell membrane. Functionally, shows cytolytic activity on many different cells by forming pore in lipid membranes. In vivo, increases heart rate or kills the animal by cardiac arrest. In addition, it binds to heparin with high affinity, interacts with Kv channel-interacting protein 1 (KCNIP1) in a calcium-independent manner, and binds to integrin alpha-V/beta-3 (ITGAV/ITGB3) with moderate affinity. The chain is Cytotoxin 4 from Naja mossambica (Mozambique spitting cobra).